The chain runs to 337 residues: MNTEATHDQNEALTTGARLRNAREQLGLSQQAVAERLCLKVSTVRDIEEDKAPADLASTFLRGYIRSYARLVHIPEEELLPGLEKQAPLRAAKVAPMQSFSLGKRRKKRDGWLMTFTWLVLFVVIGLSGAWWWQDHKAQQEEITTMADQSSAELSSNSEQGQSVPLNTSTTTDPATTSTPPASVDTTATNTQTPAVTAPAPAVDPQQNAVVSPSQANVDTAATPAPTATITPDGAAPLPTDQAGVTTPAADPNALVMNFTADCWLEVTDATGKKLFSGMQRKDGNLNLTGQAPYKLKIGAPAAVQIQYQGKPVDLSRFIRTNQVARLTLNAEQSPAQ.

Residues 1-111 are Cytoplasmic-facing; that stretch reads MNTEATHDQN…LGKRRKKRDG (111 aa). In terms of domain architecture, HTH cro/C1-type spans 19–71; sequence LRNAREQLGLSQQAVAERLCLKVSTVRDIEEDKAPADLASTFLRGYIRSYARL. A DNA-binding region (H-T-H motif) is located at residues 30 to 49; the sequence is QQAVAERLCLKVSTVRDIEE. The chain crosses the membrane as a helical; Signal-anchor for type II membrane protein span at residues 112-132; that stretch reads WLMTFTWLVLFVVIGLSGAWW. The Periplasmic segment spans residues 133–337; the sequence is WQDHKAQQEE…TLNAEQSPAQ (205 aa). Positions 145–167 are enriched in polar residues; sequence TMADQSSAELSSNSEQGQSVPLN. The interval 145–220 is disordered; the sequence is TMADQSSAEL…VSPSQANVDT (76 aa). Residues 168 to 207 are compositionally biased toward low complexity; that stretch reads TSTTTDPATTSTPPASVDTTATNTQTPAVTAPAPAVDPQQ. The segment covering 208–218 has biased composition (polar residues); the sequence is NAVVSPSQANV.

This sequence belongs to the RodZ family.

The protein resides in the cell inner membrane. In terms of biological role, cytoskeletal protein that is involved in cell-shape control through regulation of the length of the long axis. This Escherichia coli O17:K52:H18 (strain UMN026 / ExPEC) protein is Cytoskeleton protein RodZ.